A 452-amino-acid chain; its full sequence is Chromosomal replication initiator protein DnaA (452 aa).

A domain I, interacts with DnaA modulators region spans residues Met1–Gln80. A domain II region spans residues Gln80–Ser114. Residues Tyr115–Ala332 are domain III, AAA+ region. Positions 160, 162, 163, and 164 each coordinate ATP. The segment at Glu333–Val452 is domain IV, binds dsDNA.

It belongs to the DnaA family. In terms of assembly, oligomerizes as a right-handed, spiral filament on DNA at oriC.

The protein resides in the cytoplasm. Functionally, plays an essential role in the initiation and regulation of chromosomal replication. ATP-DnaA binds to the origin of replication (oriC) to initiate formation of the DNA replication initiation complex once per cell cycle. Binds the DnaA box (a 9 base pair repeat at the origin) and separates the double-stranded (ds)DNA. Forms a right-handed helical filament on oriC DNA; dsDNA binds to the exterior of the filament while single-stranded (ss)DNA is stabiized in the filament's interior. The ATP-DnaA-oriC complex binds and stabilizes one strand of the AT-rich DNA unwinding element (DUE), permitting loading of DNA polymerase. After initiation quickly degrades to an ADP-DnaA complex that is not apt for DNA replication. Binds acidic phospholipids. The chain is Chromosomal replication initiator protein DnaA from Histophilus somni (strain 129Pt) (Haemophilus somnus).